The chain runs to 391 residues: Lipoyl synthase, mitochondrial (391 aa).

Residues 1 to 44 (MVHPHLSRTKRTFFSHSSQMISRHIRKTNSLAFVRALSASETAV) constitute a mitochondrion transit peptide. [4Fe-4S] cluster is bound by residues C120, C125, C131, C150, C154, C157, and S365. The region spanning 135–354 (KKSEATATIM…KEVALEMGFL (220 aa)) is the Radical SAM core domain.

The protein belongs to the radical SAM superfamily. Lipoyl synthase family. [4Fe-4S] cluster serves as cofactor.

It localises to the mitochondrion. It catalyses the reaction [[Fe-S] cluster scaffold protein carrying a second [4Fe-4S](2+) cluster] + N(6)-octanoyl-L-lysyl-[protein] + 2 oxidized [2Fe-2S]-[ferredoxin] + 2 S-adenosyl-L-methionine + 4 H(+) = [[Fe-S] cluster scaffold protein] + N(6)-[(R)-dihydrolipoyl]-L-lysyl-[protein] + 4 Fe(3+) + 2 hydrogen sulfide + 2 5'-deoxyadenosine + 2 L-methionine + 2 reduced [2Fe-2S]-[ferredoxin]. It functions in the pathway protein modification; protein lipoylation via endogenous pathway; protein N(6)-(lipoyl)lysine from octanoyl-[acyl-carrier-protein]: step 2/2. In terms of biological role, catalyzes the radical-mediated insertion of two sulfur atoms into the C-6 and C-8 positions of the octanoyl moiety bound to the lipoyl domains of lipoate-dependent enzymes, thereby converting the octanoylated domains into lipoylated derivatives. In Clavispora lusitaniae (strain ATCC 42720) (Yeast), this protein is Lipoyl synthase, mitochondrial.